The chain runs to 109 residues: Small ribosomal subunit protein bS6c (109 aa).

It belongs to the bacterial ribosomal protein bS6 family.

The protein resides in the plastid. It is found in the chloroplast. Functionally, binds together with bS18 to 16S ribosomal RNA. The chain is Small ribosomal subunit protein bS6c from Pyropia yezoensis (Susabi-nori).